Here is a 314-residue protein sequence, read N- to C-terminus: Deoxymugineic acid synthase 1-A (314 aa).

The tract at residues 1 to 21 is disordered; sequence MGAGDKTAAGMPRIGMGTAVQ. NADP(+) is bound at residue aspartate 44. The active-site Proton donor is tyrosine 49. Histidine 112 is a binding site for substrate. Residues 158 to 159, glutamine 180, 258 to 266, and 273 to 281 each bind NADP(+); these read AN, FDEARMREN, and ELTEEEHRR.

The protein belongs to the aldo/keto reductase family. Mostly expressed in root tissues, observed in mesocotyl and embryonic roots, seedling roots, crown and seedling leafes, mature bracts, anthers, pistil, caryopsis and embryos.

It carries out the reaction 2'-deoxymugineate + NAD(+) = 3''-deamino-3''-oxonicotianamine + NADH + H(+). It catalyses the reaction 2'-deoxymugineate + NADP(+) = 3''-deamino-3''-oxonicotianamine + NADPH + H(+). It participates in siderophore biosynthesis. Its function is as follows. Catalyzes the reduction of a 3''-keto intermediate during the biosynthesis of 2'-deoxymugineic acid (DMA) from L-Met. Involved in the formation of phytosiderophores (MAs) belonging to the mugineic acid family and required to acquire iron. This is Deoxymugineic acid synthase 1-A from Triticum aestivum (Wheat).